The sequence spans 74 residues: Control protein C.MunI (74 aa).

Positions 12-67 (LKKLRKEKTDLSQESFAAQIDLDRTYYSSIENGKRNVSLVNLEKISAGLGITLSEL) constitute an HTH cro/C1-type domain. Positions 23–42 (SQESFAAQIDLDRTYYSSIE) form a DNA-binding region, H-T-H motif.

In terms of biological role, probably controls expression of its associated restriction-modification system MunI. The protein is Control protein C.MunI of Mycoplasma sp.